A 338-amino-acid chain; its full sequence is Glyceraldehyde-3-phosphate dehydrogenase (338 aa).

NAD(+)-binding positions include 11-12 and glycine 111; that span reads TI. 140 to 142 lines the D-glyceraldehyde 3-phosphate pocket; it reads SCN. Residue cysteine 141 is the Nucleophile of the active site. NAD(+) is bound at residue arginine 169. 195–196 is a D-glyceraldehyde 3-phosphate binding site; that stretch reads HG. Glutamine 302 is a binding site for NAD(+).

Belongs to the glyceraldehyde-3-phosphate dehydrogenase family. As to quaternary structure, homotetramer.

The protein localises to the cytoplasm. The enzyme catalyses D-glyceraldehyde 3-phosphate + phosphate + NADP(+) = (2R)-3-phospho-glyceroyl phosphate + NADPH + H(+). The catalysed reaction is D-glyceraldehyde 3-phosphate + phosphate + NAD(+) = (2R)-3-phospho-glyceroyl phosphate + NADH + H(+). Its pathway is carbohydrate degradation; glycolysis; pyruvate from D-glyceraldehyde 3-phosphate: step 1/5. The polypeptide is Glyceraldehyde-3-phosphate dehydrogenase (gap) (Methanobacterium formicicum).